We begin with the raw amino-acid sequence, 416 residues long: uncharacterized protein (416 aa).

The region spanning 3–150 (LDVRTITPSE…SVYRAGLDAR (148 aa)) is the N-acetyltransferase domain. Residues 83 to 85 (VTV) and 91 to 96 (RRGLLS) each bind acetyl-CoA. Tyr-124 functions as the Proton donor in the catalytic mechanism. Phe-416 acts as the Proton acceptor; via carboxylate in catalysis.

This sequence belongs to the acetyltransferase Eis family. Homohexamer; trimer of dimers.

This is an uncharacterized protein from Streptomyces griseus subsp. griseus (strain JCM 4626 / CBS 651.72 / NBRC 13350 / KCC S-0626 / ISP 5235).